The following is a 216-amino-acid chain: Ribosomal RNA large subunit methyltransferase E (216 aa).

S-adenosyl-L-methionine contacts are provided by Gly-60, Trp-62, Asp-80, Asp-96, and Asp-121. The active-site Proton acceptor is the Lys-161.

This sequence belongs to the class I-like SAM-binding methyltransferase superfamily. RNA methyltransferase RlmE family.

The protein resides in the cytoplasm. The enzyme catalyses uridine(2552) in 23S rRNA + S-adenosyl-L-methionine = 2'-O-methyluridine(2552) in 23S rRNA + S-adenosyl-L-homocysteine + H(+). Functionally, specifically methylates the uridine in position 2552 of 23S rRNA at the 2'-O position of the ribose in the fully assembled 50S ribosomal subunit. The polypeptide is Ribosomal RNA large subunit methyltransferase E (Pseudomonas fluorescens (strain SBW25)).